The following is a 212-amino-acid chain: Large ribosomal subunit protein uL3 (212 aa).

The interval 136–155 is disordered; the sequence is THGNSLSHRSNGSIGQNQTP. Glutamine 153 carries the N5-methylglutamine modification.

This sequence belongs to the universal ribosomal protein uL3 family. In terms of assembly, part of the 50S ribosomal subunit. Forms a cluster with proteins L14 and L19. In terms of processing, methylated by PrmB.

Functionally, one of the primary rRNA binding proteins, it binds directly near the 3'-end of the 23S rRNA, where it nucleates assembly of the 50S subunit. This Shewanella oneidensis (strain ATCC 700550 / JCM 31522 / CIP 106686 / LMG 19005 / NCIMB 14063 / MR-1) protein is Large ribosomal subunit protein uL3.